The chain runs to 728 residues: FAD-dependent monooxygenase avaB (728 aa).

A helical membrane pass occupies residues 17–37 (VIDLLLTFFFYSGLYGLIAAK). Residues 50 to 64 (NQQCENTDDVPQSFQ) are compositionally biased toward polar residues. The disordered stretch occupies residues 50-72 (NQQCENTDDVPQSFQRPRDTRST). Val-168 is a binding site for FAD. 490–491 (DL) provides a ligand contact to NADP(+).

Belongs to the FAD-binding monooxygenase family. It depends on FAD as a cofactor.

Its subcellular location is the membrane. It functions in the pathway secondary metabolite metabolism. Its function is as follows. Multifunctional FAD-dependent monooxygenase; part of the cluster that mediates the biosynthesis of a highly modified cyclo-arginine-tryptophan dipeptide (cRW). Within the pathway, avaB uses the avaA cyclo-arginine-tryptophan dipeptide (cRW) as substrate to generate the cyclo-Arg-formylkynurenine diketopiperazine (DKP). AvaB also catalyzes an additional N-oxidation of the avaC product which is followed by cyclization and dehydration. The first step of the pathway is perfornmed by the arginine-containing cyclodipeptide synthase (RCPDS) avaA that acts as the scaffold-generating enzyme and is responsible for formation of the cyclo-Arg-Trp (cRW) diketopiperazine. AvaB then acts as a multifunctional flavoenzyme that is responsible for generating the cyclo-Arg-formylkynurenine DKP, which can be deformylated by avaC. AvaB then further catalyzes an additional N-oxidation followed by cyclization and dehydration. The next step is an N-acetylation of the guanidine group catalyzed by the arginine N-acetyltransferase avaD. The roles of the additional enzymes identified within the ava cluster still have to be determined. In Aspergillus versicolor, this protein is FAD-dependent monooxygenase avaB.